Reading from the N-terminus, the 275-residue chain is Tumor necrosis factor-inducible gene 6 protein (275 aa).

Positions 1–17 (MVVLLCLCVLLWEEAHG) are cleaved as a signal peptide. The 94-residue stretch at 36-129 (GVYHREARAG…SERWDAYCYN (94 aa)) folds into the Link domain. 3 disulfide bridges follow: cysteine 58-cysteine 127, cysteine 82-cysteine 103, and cysteine 135-cysteine 161. An N-linked (GlcNAc...) asparagine glycan is attached at asparagine 118. Residues 135-247 (CGGVFTDPKR…GGFQIKYVTV (113 aa)) form the CUB domain. Residues glutamate 183, aspartate 191, aspartate 232, serine 234, and valine 235 each coordinate Ca(2+). A disulfide bond links cysteine 188 and cysteine 210. The span at 253–264 (SSQAKNTSTTGN) shows a compositional bias: polar residues. A disordered region spans residues 253-275 (SSQAKNTSTTGNKKFLPGRFSHL). Asparagine 258 carries N-linked (GlcNAc...) asparagine glycosylation.

In terms of assembly, interacts (via Link domain) with inter-alpha-inhibitor (I-alpha-I) component bikunin. Interacts with ITIH2/HC2; this interaction is required for transesterification of the HC to hyaluronan. Interacts (via Link and CUB domains) with ITIH1. Chondroitin sulfate may be required for the stability of the complex. Interacts (via Link domain) with various C-X-C and C-C chemokines including PF4, CXCL8, CXCL11, CXCL12, CCL2, CCL7, CCL19, CCL21, and CCL27; this interaction interferes with chemokine binding to glycosaminoglycans. Interacts (primarily via Link domain) with BMP2; this interaction is inhibited by hyaluronan. Interacts (via both Link and CUB domains) with TNFSF11. Interacts (via CUB domain) with FN1 (via type III repeats 9-14); this interaction enhances fibronectin fibril assembly. TNFAIP6 may act as a bridging molecule between FN1 and THBS1. As to expression, expressed in epiphyseal and metaphyseal bone marrow of both the femur and tibia (at protein level).

Its subcellular location is the secreted. Major regulator of extracellular matrix organization during tissue remodeling. Catalyzes the transfer of a heavy chain (HC) from inter-alpha-inhibitor (I-alpha-I) complex to hyaluronan. Cleaves the ester bond between the C-terminus of the HC and GalNAc residue of the chondroitin sulfate chain in I-alpha-I complex followed by transesterification of the HC to hyaluronan. In the process, potentiates the antiprotease function of I-alpha-I complex through release of free bikunin. Acts as a catalyst in the formation of hyaluronan-HC oligomers and hyaluronan-rich matrix surrounding the cumulus cell-oocyte complex, a necessary step for oocyte fertilization. Assembles hyaluronan in pericellular matrices that serve as platforms for receptor clustering and signaling. Enables binding of hyaluronan deposited on the surface of macrophages to LYVE1 on lymphatic endothelium and facilitates macrophage extravasation. Alters hyaluronan binding to functionally latent CD44 on vascular endothelium, switching CD44 into an active state that supports leukocyte rolling. Modulates the interaction of chemokines with extracellular matrix components and proteoglycans on endothelial cell surface, likely preventing chemokine gradient formation. In a negative feedback mechanism, may limit excessive neutrophil recruitment at inflammatory sites by antagonizing the association of CXCL8 with glycosaminoglycans on vascular endothelium. Has a role in osteogenesis and bone remodeling. Inhibits BMP2-dependent differentiation of mesenchymal stem cell to osteoblasts. Protects against bone erosion during inflammation by inhibiting TNFSF11/RANKL-dependent osteoclast activation. The polypeptide is Tumor necrosis factor-inducible gene 6 protein (Tnfaip6) (Mus musculus (Mouse)).